The sequence spans 483 residues: UDP-N-acetylmuramoyl-L-alanyl-D-glutamate--2,6-diaminopimelate ligase (483 aa).

S30 is a binding site for UDP-N-acetyl-alpha-D-muramoyl-L-alanyl-D-glutamate. ATP is bound at residue 109 to 115; sequence GTNGKTT. UDP-N-acetyl-alpha-D-muramoyl-L-alanyl-D-glutamate-binding positions include 151 to 152, S178, and R186; that span reads TT. Residue K218 is modified to N6-carboxylysine. Residues R380, 403-406, G453, and E457 contribute to the meso-2,6-diaminopimelate site; that span reads DNPR. Positions 403–406 match the Meso-diaminopimelate recognition motif motif; it reads DNPR.

Belongs to the MurCDEF family. MurE subfamily. Requires Mg(2+) as cofactor. Post-translationally, carboxylation is probably crucial for Mg(2+) binding and, consequently, for the gamma-phosphate positioning of ATP.

Its subcellular location is the cytoplasm. It catalyses the reaction UDP-N-acetyl-alpha-D-muramoyl-L-alanyl-D-glutamate + meso-2,6-diaminopimelate + ATP = UDP-N-acetyl-alpha-D-muramoyl-L-alanyl-gamma-D-glutamyl-meso-2,6-diaminopimelate + ADP + phosphate + H(+). Its pathway is cell wall biogenesis; peptidoglycan biosynthesis. Its function is as follows. Catalyzes the addition of meso-diaminopimelic acid to the nucleotide precursor UDP-N-acetylmuramoyl-L-alanyl-D-glutamate (UMAG) in the biosynthesis of bacterial cell-wall peptidoglycan. The chain is UDP-N-acetylmuramoyl-L-alanyl-D-glutamate--2,6-diaminopimelate ligase from Chlamydia pneumoniae (Chlamydophila pneumoniae).